The sequence spans 88 residues: Arminin 1a (88 aa).

Residues 1 to 18 form the signal peptide; that stretch reads MKTVLAFLFLPFIAFTHA. The propeptide occupies 19–57; the sequence is ESYEDVKEEIKNEAEKEIFEDLEEESDALDSSVREFNDA. Val-85 bears the Valine amide mark.

This sequence belongs to the arminin family. As to expression, expressed in entodermal epithelium along the body column.

It localises to the secreted. It is found in the target cell membrane. Antimicrobial peptide with a broad-spectrum antimicrobial activity. Shows very strong bactericidal activity against B.megaterium (MBC=0.1 uM), E.coli (MBC=0.2 uM), S.aureus (MBC=0.4 uM), methicillin-resistant S.aureus (MRSA) (MBC=0.4-0.8 uM), vancomycin-resistant enterococci (VRE) (E.faecalis (MBC=1.6 uM), and E.faecium (MBC=0.4-0.8 uM)), and extended-spectrum beta-lactamase (ESBL)-producing enterobacteriaceae strains (K.pneumoniae (MBC=0.4-0.8 uM), E.coli (MBC=0.2-0.4 uM)). Keeps its antibacterial activity under a wide range of salt concentrations that mimic physiological conditions of human blood, which is surprising, since Hydra is an obligate freshwater animal with nearly no salt tolerance. Does not affect red blood cells. The chain is Arminin 1a from Hydra vulgaris (Hydra).